Reading from the N-terminus, the 224-residue chain is Cytidylate kinase (224 aa).

11-19 lines the ATP pocket; it reads GPAAAGKST.

The protein belongs to the cytidylate kinase family. Type 1 subfamily.

It localises to the cytoplasm. It catalyses the reaction CMP + ATP = CDP + ADP. The catalysed reaction is dCMP + ATP = dCDP + ADP. The polypeptide is Cytidylate kinase (Geobacillus kaustophilus (strain HTA426)).